The sequence spans 764 residues: Complement factor B (764 aa).

The first 25 residues, 1 to 25 (MGSNLSPQLCLMPFILGLLSGGVTT), serve as a signal peptide directing secretion. Sushi domains lie at 35–100 (GSCS…ECRA), 101–160 (IHCP…ICDN), and 163–220 (GYCS…SCQD). Intrachain disulfides connect Cys37–Cys76, Cys62–Cys98, Cys103–Cys145, Cys131–Cys158, Cys165–Cys205, and Cys191–Cys218. N-linked (GlcNAc...) asparagine glycans are attached at residues Asn122 and Asn142. One can recognise a VWFA domain in the interval 270–469 (NIYLVLDGSD…NLEDVFFQMI (200 aa)). Residues Ser278 and Ser280 each coordinate Mg(2+). An N-linked (GlcNAc...) asparagine glycan is attached at Asn285. Thr353 serves as a coordination point for Mg(2+). Asn378 carries an N-linked (GlcNAc...) asparagine glycan. The region spanning 477 to 757 (LCGMVWEHRK…VLPWLKQKLQ (281 aa)) is the Peptidase S1 domain. 5 disulfide bridges follow: Cys478–Cys596, Cys511–Cys527, Cys599–Cys615, Cys656–Cys682, and Cys695–Cys725. Catalysis depends on charge relay system residues His526 and Asp576. Residue Ser699 is the Charge relay system of the active site.

This sequence belongs to the peptidase S1 family. Monomer. Interacts with complement C3b; this interaction is dependent on the presence of Mg(2+). As to quaternary structure, catalytic component of the C3 convertase of the alternative complement pathway, also named C3bBb, composed of complement factor B Bb and complement C3b. Catalytic component of the C5 convertase of the alternative complement pathway, also named C3bBb3b, composed of complement factor B Bb and additional molecules of complement C3b. Interacts to CFP; this interaction contributes to the stabilization of the active C3-convertase enzyme complex. It depends on Mg(2+) as a cofactor. Mn(2+) serves as cofactor. Post-translationally, cleaved by CFD following activation of the alternative complement system, generating Ba and Bb chains. Cleavage and activation takes place when CFB is already associated with complement C3b.

It is found in the secreted. It localises to the cell surface. It carries out the reaction Cleavage of Arg-|-Ser bond in complement component C3 alpha-chain to yield C3a and C3b, and Arg-|-Xaa bond in complement component C5 alpha-chain to yield C5a and C5b.. In terms of biological role, precursor of the catalytic component of the C3 and C5 convertase complexes of the alternative pathway of the complement system, a cascade of proteins that leads to phagocytosis and breakdown of pathogens and signaling that strengthens the adaptive immune system. The alternative complement pathway acts as an amplification loop that enhances other complement pathways (classical, lectin and GZMK) by promoting formation of additional C3 and C5 convertases. CFB is cleaved and activated by CFD to generate Ba and Bb chains; Bb chain constituting the catalytic component of the C3 and C5 convertases. Its function is as follows. Serine protease component of the complement C3 and C5 convertase complexes of the alternative complement pathway. Following cleavage and activation by factor D (CFD), forms the C3 convertase together with complement C3b. As part of the C3 convertase, cleaves and activates C3 into C3a anaphylatoxin and C3b opsonin, the next components of the complement pathways. When an additional complement C3b molecule binds to the C3 convertase, forms the C5 convertase, which cleaves and activates C5 into C5a anaphylatoxin and C5b component of the membrane attack complex. Functionally, involved in proliferation and differentiation of preactivated B-lymphocytes, rapid spreading of peripheral blood monocytes, stimulation of lymphocyte blastogenesis and lysis of erythrocytes. In Pongo pygmaeus (Bornean orangutan), this protein is Complement factor B (CFB).